Consider the following 172-residue polypeptide: Dehydratase cfoI (172 aa).

Residues histidine 86 and histidine 111 contribute to the active site.

The protein belongs to the scytalone dehydratase family. As to quaternary structure, homotrimer. Each subunit contains an active site, located in the central part of the hydrophobic core of the monomer, which functions independently.

It functions in the pathway secondary metabolite biosynthesis; flavonoid biosynthesis. Functionally, cytochrome P450 monooxygenase; part of the gene cluster that mediates the biosynthesis of chlorflavonin, a fungal flavonoid with acetolactate synthase inhibitory activity. Within the pathway, cfoI is responsible for the hydroxylation of the flavonoid skeleton at position C3 with cfoF. The pathway begins with the PKS-NRPS hybrid synthetase cfoA that uses benzoic acid or p-hydroxybenzoic acid as a starter unit with four rounds of chain elongation using malonyl-CoA to form the chalcone skeleton. Then, a new type of chalcone isomerase, cfoK, catalyzes the conversion of the chalcone into a flavanone by a histidine-mediated oxa-Michael addition mechanism. The desaturation of flavanone to flavone is catalyzed by a new type of flavone synthase, the flavin mononucleotide (FMN)-dependent oxidoreductase cfoJ. Monooxygenases cfoF, cfoG, and P450 cfoH are responsible for the hydroxylation of the flavonoid skeleton at sites C3, C8, and C2', respectively. Like cfoF, the dehydratase cfoI plays also a role in the hydroxylation of position C3. Methyltransferases cfoB, cfoC, and cfoD then catalyze the methylation of C7-OH, C8-OH, and C3-OH, respectively. Finally, the monooxygenase cfoE is responsible for the chlorination of flavonoid at position C3'. The protein is Dehydratase cfoI of Aspergillus candidus.